The chain runs to 417 residues: Origin of replication complex subunit 4 (417 aa).

59–66 is a binding site for ATP; that stretch reads GPRGSGKA.

Belongs to the ORC4 family. As to quaternary structure, component of the origin recognition complex (ORC) composed of at least ORC1 (ORC1A or ORC1B), ORC2, ORC3, ORC4, ORC5 and ORC6. ORC is regulated in a cell-cycle and development dependent manner. It is sequentially assembled at the exit from anaphase of mitosis and disassembled as cells enter S phase. Interacts directly with ORC1A, ORC2, ORC3, ORC5 and ORC6. Follow a cell-cycle regulation with a peak at the G1/S-phase. Isoform AtORC4a is expressed at low levels ubiquitously. Isoform AtORC4b is mostly expressed in siliques, flowers and flower buds, and, to a lower exent, in roots, leaves and stems.

The protein resides in the nucleus. In terms of biological role, component of the origin recognition complex (ORC) that binds origins of replication. DNA-binding is ATP-dependent. The specific DNA sequences that define origins of replication have not been identified yet. ORC is required to assemble the pre-replication complex necessary to initiate DNA replication. The chain is Origin of replication complex subunit 4 from Arabidopsis thaliana (Mouse-ear cress).